Reading from the N-terminus, the 555-residue chain is Potassium-transporting ATPase potassium-binding subunit (555 aa).

Transmembrane regions (helical) follow at residues 2 to 22 (IWVA…PTGI), 60 to 80 (QYAL…YFIF), 130 to 150 (IGIT…VMAF), 173 to 193 (VFLP…VPQT), 246 to 266 (MSNI…PFTY), 278 to 298 (ILFV…TTSE), 374 to 394 (AGFV…GLMV), 412 to 432 (LIAV…ALAL), 483 to 503 (LVMF…AASL), and 525 to 545 (GIFI…MLVL).

The protein belongs to the KdpA family. In terms of assembly, the system is composed of three essential subunits: KdpA, KdpB and KdpC.

The protein resides in the cell membrane. Functionally, part of the high-affinity ATP-driven potassium transport (or Kdp) system, which catalyzes the hydrolysis of ATP coupled with the electrogenic transport of potassium into the cytoplasm. This subunit binds the extracellular potassium ions and delivers the ions to the membrane domain of KdpB through an intramembrane tunnel. The sequence is that of Potassium-transporting ATPase potassium-binding subunit from Bacillus thuringiensis subsp. konkukian (strain 97-27).